Reading from the N-terminus, the 239-residue chain is Ribonuclease PH (239 aa).

Phosphate is bound by residues R86 and 124-126 (GTR).

The protein belongs to the RNase PH family. Homohexameric ring arranged as a trimer of dimers.

It carries out the reaction tRNA(n+1) + phosphate = tRNA(n) + a ribonucleoside 5'-diphosphate. Its function is as follows. Phosphorolytic 3'-5' exoribonuclease that plays an important role in tRNA 3'-end maturation. Removes nucleotide residues following the 3'-CCA terminus of tRNAs; can also add nucleotides to the ends of RNA molecules by using nucleoside diphosphates as substrates, but this may not be physiologically important. Probably plays a role in initiation of 16S rRNA degradation (leading to ribosome degradation) during starvation. The sequence is that of Ribonuclease PH from Anaeromyxobacter dehalogenans (strain 2CP-C).